A 456-amino-acid chain; its full sequence is MLHLYNSLTRKKEPFVSLKPGTIGMYVCGITVYDHCHLGHARSMVAFDVMVRYLRSQGFDVTYVRNITDIDDKIIARASERGVSIDELTAQYIDAMNNDTHALNILPPDHEPRATGHIETIIRLIQRLLEKGNAYVSENGDVCYEVDTFPEYGKLSHKDIEGLVSGSRVEIVKEKRSPLDFVLWKKAKPGEPSWPSPWGEGRPGWHIECSAMAMHELGEQFDIHGGGLDLQFPHHENEIAQSEAATGKPFANYWLHVGMLQVNGEKMAKSIGNFYTIADVLKEHHPEVIRYFLLSSHYRSPLNYSEENLLNAKKALIRLYQAVKDVPPQTEDSKLDEYWQVQFNQAMNDDFNTPVALSVLFQLAHEVNKSNSPALAHTLKNLAGILGFLQKDPESFLQSGLAEEEKLVIEQLIAERLQARAERNWAKADQIRADLLSKGIELEDGATGTTWRRIAE.

Cysteine 28 contributes to the Zn(2+) binding site. Positions isoleucine 30 to histidine 40 match the 'HIGH' region motif. Residues cysteine 209, histidine 234, and glutamate 238 each contribute to the Zn(2+) site. The 'KMSKS' region signature appears at lysine 266–serine 270. Lysine 269 is a binding site for ATP.

The protein belongs to the class-I aminoacyl-tRNA synthetase family. As to quaternary structure, monomer. Requires Zn(2+) as cofactor.

Its subcellular location is the cytoplasm. The enzyme catalyses tRNA(Cys) + L-cysteine + ATP = L-cysteinyl-tRNA(Cys) + AMP + diphosphate. The protein is Cysteine--tRNA ligase of Legionella pneumophila subsp. pneumophila (strain Philadelphia 1 / ATCC 33152 / DSM 7513).